The primary structure comprises 270 residues: Bacterial microcompartment shell protein PduB (270 aa).

The segment at L6 to V18 is probable helix that binds cargo to the BMC shell. 2 BMC circularly permuted domains span residues E47 to F152 and D154 to L258.

It belongs to the EutL/PduB family. As to quaternary structure, homotrimerizes to form a pseudohexamer with a central pore. The trimers pack into an array. In terms of processing, in purified BMCs seen as a 28.0 kDa and 25.0 kDa form, both of which have been N-terminally sequenced and whose N-fMet is removed; the smaller form is called PduB'.

Its subcellular location is the bacterial microcompartment. It participates in polyol metabolism; 1,2-propanediol degradation. Its function is as follows. The two proteins produced are among the major shell proteins of the bacterial microcompartment (BMC) dedicated to 1,2-propanediol (1,2-PD) degradation. Required for structural integrity of BMCs and to mitigate propionaldehyde toxicity. The N-terminal 13 residues are important for correct assembly of the BMC shell. The isolated BMC shell component protein ratio for J:A:B':B:K:T:U is approximately 15:10:7:6:1:1:2. The N-terminus of the long form (PduB) is required for correct formation of BMCs, deletions in the first 37 residues have substantially reduced levels of the major lumen enzymes. May play a major role in binding the enzyme contents to the shell. The 1,2-PD-specific bacterial microcompartment (BMC) concentrates low levels of 1,2-PD catabolic enzymes, concentrates volatile reaction intermediates thus enhancing pathway flux and keeps the level of toxic, mutagenic propionaldehyde low. The polypeptide is Bacterial microcompartment shell protein PduB (Salmonella typhimurium (strain LT2 / SGSC1412 / ATCC 700720)).